A 179-amino-acid chain; its full sequence is Large ribosomal subunit protein uL5 (179 aa).

This sequence belongs to the universal ribosomal protein uL5 family. As to quaternary structure, part of the 50S ribosomal subunit; part of the 5S rRNA/L5/L18/L25 subcomplex. Contacts the 5S rRNA and the P site tRNA. Forms a bridge to the 30S subunit in the 70S ribosome.

This is one of the proteins that bind and probably mediate the attachment of the 5S RNA into the large ribosomal subunit, where it forms part of the central protuberance. In the 70S ribosome it contacts protein S13 of the 30S subunit (bridge B1b), connecting the 2 subunits; this bridge is implicated in subunit movement. Contacts the P site tRNA; the 5S rRNA and some of its associated proteins might help stabilize positioning of ribosome-bound tRNAs. This chain is Large ribosomal subunit protein uL5, found in Ectopseudomonas mendocina (strain ymp) (Pseudomonas mendocina).